Reading from the N-terminus, the 297-residue chain is Lipoyl synthase (297 aa).

Residues cysteine 37, cysteine 42, cysteine 48, cysteine 63, cysteine 67, cysteine 70, and serine 276 each coordinate [4Fe-4S] cluster. A Radical SAM core domain is found at 49 to 265 (WSRKHATVMI…ERIAKTKGFL (217 aa)).

Belongs to the radical SAM superfamily. Lipoyl synthase family. Requires [4Fe-4S] cluster as cofactor.

It localises to the cytoplasm. It catalyses the reaction [[Fe-S] cluster scaffold protein carrying a second [4Fe-4S](2+) cluster] + N(6)-octanoyl-L-lysyl-[protein] + 2 oxidized [2Fe-2S]-[ferredoxin] + 2 S-adenosyl-L-methionine + 4 H(+) = [[Fe-S] cluster scaffold protein] + N(6)-[(R)-dihydrolipoyl]-L-lysyl-[protein] + 4 Fe(3+) + 2 hydrogen sulfide + 2 5'-deoxyadenosine + 2 L-methionine + 2 reduced [2Fe-2S]-[ferredoxin]. It participates in protein modification; protein lipoylation via endogenous pathway; protein N(6)-(lipoyl)lysine from octanoyl-[acyl-carrier-protein]: step 2/2. Its function is as follows. Catalyzes the radical-mediated insertion of two sulfur atoms into the C-6 and C-8 positions of the octanoyl moiety bound to the lipoyl domains of lipoate-dependent enzymes, thereby converting the octanoylated domains into lipoylated derivatives. The chain is Lipoyl synthase from Rickettsia prowazekii (strain Madrid E).